The chain runs to 190 residues: CDP-diacylglycerol--glycerol-3-phosphate 3-phosphatidyltransferase (190 aa).

At 6–17 (GVFNIPMYLTLF) the chain is on the cytoplasmic side. A helical membrane pass occupies residues 18 to 42 (RIIMVPCFVAVFYWPIYWSPMLCTL). The Periplasmic portion of the chain corresponds to 43–65 (IFFIAAITDWFDGFLARRWNQTS). The chain crosses the membrane as a helical span at residues 66-86 (RIGGFLDPIADKIMIITALIL). Residues 87 to 91 (ISEHF) lie on the Cytoplasmic side of the membrane. The helical transmembrane segment at 92–112 (HVWWMTLPISSIIIREILISS) threads the bilayer. Over 113 to 150 (LRECIARVDNKNNISVIWLSKVKTFAQMLALIALLCRL) the chain is Periplasmic. A helical transmembrane segment spans residues 151–173 (NEWTVIMGVISLYTAMLLTLWSM). The Cytoplasmic segment spans residues 174 to 186 (CYYVYSVSSILLQ).

The protein belongs to the CDP-alcohol phosphatidyltransferase class-I family.

It is found in the cell inner membrane. It carries out the reaction a CDP-1,2-diacyl-sn-glycerol + sn-glycerol 3-phosphate = a 1,2-diacyl-sn-glycero-3-phospho-(1'-sn-glycero-3'-phosphate) + CMP + H(+). The protein operates within phospholipid metabolism; phosphatidylglycerol biosynthesis; phosphatidylglycerol from CDP-diacylglycerol: step 1/2. In terms of biological role, catalyzes the conversion of cytidine diphosphate diacylglycerol (CDP-DG) and glycerol 3-phosphate into phosphatidylglycerol. Essential for the synthesis of anionic phospholipids, thereby playing a role in balancing the ratio of zwitterionic and anionic phospholipids, which is thought to be important for normal membrane function. The sequence is that of CDP-diacylglycerol--glycerol-3-phosphate 3-phosphatidyltransferase from Blochmanniella floridana.